Reading from the N-terminus, the 185-residue chain is Ribosome-recycling factor (185 aa).

The tract at residues 142–165 (IVKDGDAGEDEGSRAEKELDGLTK) is disordered.

Belongs to the RRF family.

The protein resides in the cytoplasm. In terms of biological role, responsible for the release of ribosomes from messenger RNA at the termination of protein biosynthesis. May increase the efficiency of translation by recycling ribosomes from one round of translation to another. The sequence is that of Ribosome-recycling factor from Renibacterium salmoninarum (strain ATCC 33209 / DSM 20767 / JCM 11484 / NBRC 15589 / NCIMB 2235).